The chain runs to 37 residues: Large ribosomal subunit protein bL36 (37 aa).

It belongs to the bacterial ribosomal protein bL36 family.

The chain is Large ribosomal subunit protein bL36 from Thermosynechococcus vestitus (strain NIES-2133 / IAM M-273 / BP-1).